The chain runs to 182 residues: ATP synthase subunit delta (182 aa).

Belongs to the ATPase delta chain family. In terms of assembly, F-type ATPases have 2 components, F(1) - the catalytic core - and F(0) - the membrane proton channel. F(1) has five subunits: alpha(3), beta(3), gamma(1), delta(1), epsilon(1). CF(0) has four main subunits: a(1), b(1), b'(1) and c(10-14). The alpha and beta chains form an alternating ring which encloses part of the gamma chain. F(1) is attached to F(0) by a central stalk formed by the gamma and epsilon chains, while a peripheral stalk is formed by the delta, b and b' chains.

It is found in the cellular thylakoid membrane. Its function is as follows. F(1)F(0) ATP synthase produces ATP from ADP in the presence of a proton or sodium gradient. F-type ATPases consist of two structural domains, F(1) containing the extramembraneous catalytic core and F(0) containing the membrane proton channel, linked together by a central stalk and a peripheral stalk. During catalysis, ATP synthesis in the catalytic domain of F(1) is coupled via a rotary mechanism of the central stalk subunits to proton translocation. In terms of biological role, this protein is part of the stalk that links CF(0) to CF(1). It either transmits conformational changes from CF(0) to CF(1) or is implicated in proton conduction. The sequence is that of ATP synthase subunit delta from Synechococcus sp. (strain JA-2-3B'a(2-13)) (Cyanobacteria bacterium Yellowstone B-Prime).